Reading from the N-terminus, the 505-residue chain is Salutaridine synthase (505 aa).

Residues 10–30 (DFWMIACTVIIVFALVKFMFS) form a helical membrane-spanning segment. Cys444 provides a ligand contact to heme.

Belongs to the cytochrome P450 family. Heme serves as cofactor.

It localises to the endoplasmic reticulum membrane. It catalyses the reaction (R)-reticuline + reduced [NADPH--hemoprotein reductase] + O2 = salutaridine + oxidized [NADPH--hemoprotein reductase] + 2 H2O + H(+). Functionally, cytochrome P450 monooxygenase involved in biosynthesis of morphinan-type benzylisoquinoline and opiate alkaloids natural products. Catalyzes the formation of the morphinan alkaloid salutaridine by intramolecular phenol oxidation of (R)-reticuline without the incorporation of oxygen into the product. Can also use (R)-norreticuline as substrate. This Papaver somniferum (Opium poppy) protein is Salutaridine synthase.